The chain runs to 118 residues: ATP synthase subunit g, mitochondrial (118 aa).

As to quaternary structure, F-type ATP synthases have 2 components, the catalytic core F(1) and the membrane-embedded component F(0), linked together by a central stalk and a peripheral stalk. The central stalk, also called rotor shaft, is often seen as part of F(1). The peripheral stalk is seen as part of F(0). F(0) contains the membrane channel next to the rotor. F-type ATP synthases form dimers but each monomer functions independently in ATP generation. The dimer consists of 18 different polypeptides: ATP1 (subunit alpha, part of F(1), 3 molecules per monomer), ATP2 (subunit beta, part of F(1), 3 molecules per monomer), ATP3 (subunit gamma, part of the central stalk), ATP4 (subunit b, part of the peripheral stalk), ATP5/OSCP (subunit 5/OSCP, part of the peripheral stalk), ATP6 (subunit a, part of the peripheral stalk), ATP7 (subunit d, part of the peripheral stalk), ATP8 (subunit 8, part of the peripheral stalk), OLI1 (subunit c, part of the rotor, 10 molecules per monomer), ATP14 (subunit h, part of the peripheral stalk), ATP15 (subunit epsilon, part of the central stalk), ATP16 (subunit delta, part of the central stalk), ATP17 (subunit f, part of the peripheral stalk), ATP18 (subunit i/j, part of the peripheral stalk). Dimer-specific subunits are ATP19 (subunit k, at interface between monomers), ATP20 (subunit g, at interface between monomers), TIM11 (subunit e, at interface between monomers). Also contains subunit L.

The protein resides in the mitochondrion inner membrane. In terms of biological role, mitochondrial membrane ATP synthase (F(1)F(0) ATP synthase or Complex V) produces ATP from ADP in the presence of a proton gradient across the membrane which is generated by electron transport complexes of the respiratory chain. F-type ATP synthases consist of two structural domains, F(1) - containing the extramembraneous catalytic core, and F(0) - containing the membrane proton channel, linked together by a central stalk and a peripheral stalk. During catalysis, ATP synthesis in the catalytic domain of F(1) is coupled via a rotary mechanism of the central stalk subunits to proton translocation. Part of the complex F(0) domain Minor subunit located with subunit a/ATP6 in the membrane. Together with subunit e/TIM11, probably contributes to membrane curvature at the site of the ATP synthase dimer, ultimately contributing to formation of cristae. The chain is ATP synthase subunit g, mitochondrial from Pichia angusta (Yeast).